Consider the following 81-residue polypeptide: Pyruvate synthase subunit PorD (81 aa).

The tract at residues 1 to 20 (MESLGATVKEPGSTRKNKTG) is disordered. 4Fe-4S ferredoxin-type domains follow at residues 25–54 (FKPFLDKDKCIDCDNCILFCPEGCIDKEHE) and 51–80 (KEHEIDYDYCKGCGICAEECPVKAIKMERE). Cys34, Cys37, Cys40, Cys44, Cys60, Cys63, Cys66, and Cys70 together coordinate [4Fe-4S] cluster.

Heterotetramer of one alpha, one beta, one delta and one gamma chain. The cofactor is [4Fe-4S] cluster.

In Methanothermobacter marburgensis (strain ATCC BAA-927 / DSM 2133 / JCM 14651 / NBRC 100331 / OCM 82 / Marburg) (Methanobacterium thermoautotrophicum), this protein is Pyruvate synthase subunit PorD (porD).